A 494-amino-acid chain; its full sequence is Glutamyl-tRNA(Gln) amidotransferase subunit A (494 aa).

Catalysis depends on charge relay system residues lysine 80 and serine 155. Catalysis depends on serine 179, which acts as the Acyl-ester intermediate.

This sequence belongs to the amidase family. GatA subfamily. Heterotrimer of A, B and C subunits.

It catalyses the reaction L-glutamyl-tRNA(Gln) + L-glutamine + ATP + H2O = L-glutaminyl-tRNA(Gln) + L-glutamate + ADP + phosphate + H(+). In terms of biological role, allows the formation of correctly charged Gln-tRNA(Gln) through the transamidation of misacylated Glu-tRNA(Gln) in organisms which lack glutaminyl-tRNA synthetase. The reaction takes place in the presence of glutamine and ATP through an activated gamma-phospho-Glu-tRNA(Gln). The polypeptide is Glutamyl-tRNA(Gln) amidotransferase subunit A (Lachnoclostridium phytofermentans (strain ATCC 700394 / DSM 18823 / ISDg) (Clostridium phytofermentans)).